The primary structure comprises 196 residues: Putative 3-methyladenine DNA glycosylase (196 aa).

The protein belongs to the DNA glycosylase MPG family.

In Bacillus subtilis (strain 168), this protein is Putative 3-methyladenine DNA glycosylase (yxlJ).